Here is an 877-residue protein sequence, read N- to C-terminus: Phosphoenolpyruvate carboxylase (877 aa).

Catalysis depends on residues His-138 and Lys-543.

This sequence belongs to the PEPCase type 1 family. Mg(2+) serves as cofactor.

The catalysed reaction is oxaloacetate + phosphate = phosphoenolpyruvate + hydrogencarbonate. Its function is as follows. Forms oxaloacetate, a four-carbon dicarboxylic acid source for the tricarboxylic acid cycle. The chain is Phosphoenolpyruvate carboxylase from Aeromonas salmonicida (strain A449).